Reading from the N-terminus, the 150-residue chain is Dihydroneopterin triphosphate diphosphatase (150 aa).

Residues 5–146 enclose the Nudix hydrolase domain; that stretch reads VYKRPVSILV…SNRQAIEQFV (142 aa). Substrate contacts are provided by lysine 7, arginine 29, and threonine 40. The Nudix box motif lies at 41 to 62; sequence GSVEEGETAPQAAMREVKEEVT. The Mg(2+) site is built by glutamate 56 and glutamate 60. A substrate-binding site is contributed by 81–84; that stretch reads FEIF. Residue glutamate 117 coordinates Mg(2+). A substrate-binding site is contributed by serine 135.

It belongs to the Nudix hydrolase family. The cofactor is Mg(2+).

It catalyses the reaction 7,8-dihydroneopterin 3'-triphosphate + H2O = 7,8-dihydroneopterin 3'-phosphate + diphosphate + H(+). Its function is as follows. Catalyzes the hydrolysis of dihydroneopterin triphosphate to dihydroneopterin monophosphate and pyrophosphate. Required for efficient folate biosynthesis. Can also hydrolyze nucleoside triphosphates with a preference for dATP. In Escherichia coli O157:H7, this protein is Dihydroneopterin triphosphate diphosphatase (nudB).